A 133-amino-acid chain; its full sequence is ATP synthase epsilon chain, chloroplastic (133 aa).

Belongs to the ATPase epsilon chain family. As to quaternary structure, F-type ATPases have 2 components, CF(1) - the catalytic core - and CF(0) - the membrane proton channel. CF(1) has five subunits: alpha(3), beta(3), gamma(1), delta(1), epsilon(1). CF(0) has three main subunits: a, b and c.

It localises to the plastid. Its subcellular location is the chloroplast thylakoid membrane. Functionally, produces ATP from ADP in the presence of a proton gradient across the membrane. This Nicotiana tomentosiformis (Tobacco) protein is ATP synthase epsilon chain, chloroplastic.